A 289-amino-acid polypeptide reads, in one-letter code: MKLRLGLPKGSLQEKTFQLFKKAGYDLQVNSRSYYPAVNDPELEILLMRAQEIPRYVHEGVLDAGLSGLDWIMENEADVVEVADLIYSKRSQRPVRLVLAVANDSDIREVRDLQGKRIATELVNVTRRYLAAQGVEAIVEYSYGATEVKVPNLVDAIADLTETGSSLRANNLRILAVILESNTKLHANRAAWADPWKREKLLNLTVLLTGALRAENMVGLKMNVPGDRIDAVLGVLPAMKHPTVSQLFNSDWVAIETILNEQQVRDLIPILKRAGAQDIIEYPLNKVIP.

Belongs to the ATP phosphoribosyltransferase family. Long subfamily. Mg(2+) is required as a cofactor.

Its subcellular location is the cytoplasm. The enzyme catalyses 1-(5-phospho-beta-D-ribosyl)-ATP + diphosphate = 5-phospho-alpha-D-ribose 1-diphosphate + ATP. The protein operates within amino-acid biosynthesis; L-histidine biosynthesis; L-histidine from 5-phospho-alpha-D-ribose 1-diphosphate: step 1/9. Its activity is regulated as follows. Feedback inhibited by histidine. Functionally, catalyzes the condensation of ATP and 5-phosphoribose 1-diphosphate to form N'-(5'-phosphoribosyl)-ATP (PR-ATP). Has a crucial role in the pathway because the rate of histidine biosynthesis seems to be controlled primarily by regulation of HisG enzymatic activity. This is ATP phosphoribosyltransferase from Desulforudis audaxviator (strain MP104C).